The sequence spans 806 residues: Xylosyltransferase sqv-6 (806 aa).

Residues 1 to 11 (MLFNGTTKYRD) are Cytoplasmic-facing. Residues 12–32 (YAIVISLFFLLNVYLLYNTAQ) form a helical; Signal-anchor for type II membrane protein membrane-spanning segment. The Lumenal segment spans residues 33 to 806 (HTQVGNSKHI…GYDEDTQTLI (774 aa)). A disulfide bridge connects residues Cys-57 and Cys-85. 2 N-linked (GlcNAc...) asparagine glycosylation sites follow: Asn-89 and Asn-169. 3 disulfide bridges follow: Cys-101–Cys-445, Cys-464–Cys-478, and Cys-466–Cys-476. In terms of domain architecture, WSC spans 109–205 (IDQRIGCFLD…FNAVEIFRTG (97 aa)). UDP-alpha-D-xylose contacts are provided by residues Asp-264 and 293–295 (TIW). A glycan (N-linked (GlcNAc...) asparagine) is linked at Asn-325. A UDP-alpha-D-xylose-binding site is contributed by 398-399 (DW). UDP-alpha-D-xylose is bound by residues Ser-479 and 505 to 506 (RK). Residues Asn-614, Asn-655, and Asn-719 are each glycosylated (N-linked (GlcNAc...) asparagine). Cysteines 772 and 778 form a disulfide.

Belongs to the glycosyltransferase 14 family. XylT subfamily. A divalent metal cation is required as a cofactor.

The protein resides in the endoplasmic reticulum membrane. The protein localises to the golgi apparatus membrane. The enzyme catalyses UDP-alpha-D-xylose + L-seryl-[protein] = 3-O-(beta-D-xylosyl)-L-seryl-[protein] + UDP + H(+). Its pathway is glycan metabolism; chondroitin sulfate biosynthesis. It functions in the pathway glycan metabolism; heparan sulfate biosynthesis. Its function is as follows. Catalyzes the first step in biosynthesis of glycosaminoglycan. Transfers D-xylose from UDP-D-xylose to specific serine residues of the core protein. Required for vulval morphogenesis and zygotic cytokinesis, suggesting that glycosaminoglycans play a central role in vulval morphogenesis. This chain is Xylosyltransferase sqv-6, found in Caenorhabditis elegans.